The primary structure comprises 296 residues: 4-hydroxybenzoate octaprenyltransferase (296 aa).

8 helical membrane-spanning segments follow: residues Ile28–Ile48, Leu51–Ile71, Leu102–Leu122, Phe143–Phe163, Ala174–Met194, Phe212–Ala232, Val233–Leu253, and Phe274–Phe294.

Belongs to the UbiA prenyltransferase family. Mg(2+) serves as cofactor.

The protein resides in the cell inner membrane. It catalyses the reaction all-trans-octaprenyl diphosphate + 4-hydroxybenzoate = 4-hydroxy-3-(all-trans-octaprenyl)benzoate + diphosphate. Its pathway is cofactor biosynthesis; ubiquinone biosynthesis. In terms of biological role, catalyzes the prenylation of para-hydroxybenzoate (PHB) with an all-trans polyprenyl group. Mediates the second step in the final reaction sequence of ubiquinone-8 (UQ-8) biosynthesis, which is the condensation of the polyisoprenoid side chain with PHB, generating the first membrane-bound Q intermediate 3-octaprenyl-4-hydroxybenzoate. The sequence is that of 4-hydroxybenzoate octaprenyltransferase from Neisseria meningitidis serogroup C (strain 053442).